The primary structure comprises 236 residues: ATP-dependent dethiobiotin synthetase BioD (236 aa).

T19 provides a ligand contact to Mg(2+). Residue K40 is part of the active site. Mg(2+) contacts are provided by D61 and E122. ATP is bound by residues D61, 122 to 125 (EGVG), 182 to 183 (NT), and 211 to 213 (PRL).

The protein belongs to the dethiobiotin synthetase family. Homodimer. Requires Mg(2+) as cofactor.

It localises to the cytoplasm. It carries out the reaction (7R,8S)-7,8-diammoniononanoate + CO2 + ATP = (4R,5S)-dethiobiotin + ADP + phosphate + 3 H(+). The protein operates within cofactor biosynthesis; biotin biosynthesis; biotin from 7,8-diaminononanoate: step 1/2. Catalyzes a mechanistically unusual reaction, the ATP-dependent insertion of CO2 between the N7 and N8 nitrogen atoms of 7,8-diaminopelargonic acid (DAPA, also called 7,8-diammoniononanoate) to form a ureido ring. The sequence is that of ATP-dependent dethiobiotin synthetase BioD from Janthinobacterium sp. (strain Marseille) (Minibacterium massiliensis).